Reading from the N-terminus, the 698-residue chain is Interleukin enhancer-binding factor 3 (698 aa).

Positions 5 to 379 (RIFLNDDRHV…ALKRPMEEDG (375 aa)) constitute a DZF domain. 3 disordered regions span residues 51-88 (QQEK…PTRT), 374-403 (PMEE…PPQA), and 473-522 (EEKE…KHGK). The segment covering 61 to 71 (EQPEPEEPETT) has biased composition (acidic residues). Basic and acidic residues-rich tracts occupy residues 72 to 81 (EEGKDSEGKT) and 374 to 384 (PMEEDGEDKSP). The short motif at 372 to 390 (KRPMEEDGEDKSPSKKKKK) is the Bipartite nuclear localization signal element. Residues 399–468 (EPPQAMNALM…AVKVLQDMGL (70 aa)) enclose the DRBM 1 domain. The span at 490–503 (TPAQPADSTQTDSA) shows a compositional bias: polar residues. The region spanning 520 to 586 (HGKNPVMELN…ALAALEKLFP (67 aa)) is the DRBM 2 domain.

A component of a ybx2/frgy2-containing mRNA-ribonucleoprotein (mRNP) complex. Also a component of the CCAAT box transcription factor (CBTF) complex. In terms of processing, phosphorylated. Phosphorylation affects nuclear translocation. Methylated by protein arginine N-methyltransferase 1 (prmt1b) in the RGG-rich domain. Methylation decreases DNA-binding and thereby decreases transcription of the gata2 gene, but does not regulate dsRNA binding or subcellular localization.

Its subcellular location is the nucleus. The protein resides in the cytoplasm. In terms of biological role, RNA-binding protein that plays an essential role in the biogenesis of circular RNAs (circRNAs) which are produced by back-splicing circularization of pre-mRNAs. Within the nucleus, promotes circRNAs processing by stabilizing the regulatory elements residing in the flanking introns of the circularized exons. Plays thereby a role in the back-splicing of a subset of circRNAs. As a consequence, participates in a wide range of transcriptional and post-transcriptional processes. Binds to poly-U elements and AU-rich elements (AREs) in the 3'-UTR of target mRNAs. Upon viral infection, ILF3 accumulates in the cytoplasm and participates in the innate antiviral response. Mechanistically, ILF3 becomes phosphorylated and activated by the double-stranded RNA-activated protein kinase/PKR which releases ILF3 from cellular mature circRNAs. In turn, unbound ILF3 molecules are able to interact with and thus inhibit viral mRNAs. Has a cytoplasmic role early in development as part of a ribonucleoprotein (mRNP) complex which may regulate mRNA transport and/or translation. Following nuclear localization at the mid-blastula transition, acts as a transcription factor and binds the 5'-CCAAT-3' promoter sequence to regulate transcription of the gata2 gene as a subunit of the CCAAT box transcription factor (CBTF). Its role as an mRNP component negatively regulates its activity as a transcription factor by precluding its nuclear localization. This Xenopus tropicalis (Western clawed frog) protein is Interleukin enhancer-binding factor 3.